The primary structure comprises 224 residues: Transposase for insertion sequence element IS257 in transposon Tn4003 (224 aa).

Positions 33 to 52 (EILRGRGVNVHHSTVYRWVQ) form a DNA-binding region, H-T-H motif. Residues 73-222 (WRIDETYIKI…SPCHEISIML (150 aa)) form the Integrase catalytic domain.

Involved in the transposition of the insertion sequence. The protein is Transposase for insertion sequence element IS257 in transposon Tn4003 of Staphylococcus aureus.